We begin with the raw amino-acid sequence, 1366 residues long: DNA-directed RNA polymerase subunit beta' (1366 aa).

The segment covering 1–20 has biased composition (basic residues); sequence MTSSKPKKTSRVRKTTKNSK. The segment at 1–34 is disordered; that stretch reads MTSSKPKKTSRVRKTTKNSKKNNPLTMPALAKTP. Positions 248, 315, 322, and 325 each coordinate Zn(2+). Residues 1291 to 1366 form a disordered region; sequence YTVDMPQSPS…LQEEGLLSDE (76 aa). The segment covering 1295–1305 has biased composition (polar residues); that stretch reads MPQSPSVSSTA. Positions 1354–1366 are enriched in low complexity; it reads LEGLQEEGLLSDE.

The protein belongs to the RNA polymerase beta' chain family. RpoC2 subfamily. In cyanobacteria the RNAP catalytic core is composed of 2 alpha, 1 beta, 1 beta', 1 gamma and 1 omega subunit. When a sigma factor is associated with the core the holoenzyme is formed, which can initiate transcription. It depends on Zn(2+) as a cofactor.

It carries out the reaction RNA(n) + a ribonucleoside 5'-triphosphate = RNA(n+1) + diphosphate. Functionally, DNA-dependent RNA polymerase catalyzes the transcription of DNA into RNA using the four ribonucleoside triphosphates as substrates. In Prochlorococcus marinus (strain MIT 9301), this protein is DNA-directed RNA polymerase subunit beta'.